Reading from the N-terminus, the 500-residue chain is Probable cytosol aminopeptidase (500 aa).

Positions 265 and 270 each coordinate Mn(2+). Lysine 277 is an active-site residue. Positions 288, 347, and 349 each coordinate Mn(2+). Arginine 351 is a catalytic residue.

The protein belongs to the peptidase M17 family. The cofactor is Mn(2+).

The protein localises to the cytoplasm. It catalyses the reaction Release of an N-terminal amino acid, Xaa-|-Yaa-, in which Xaa is preferably Leu, but may be other amino acids including Pro although not Arg or Lys, and Yaa may be Pro. Amino acid amides and methyl esters are also readily hydrolyzed, but rates on arylamides are exceedingly low.. The catalysed reaction is Release of an N-terminal amino acid, preferentially leucine, but not glutamic or aspartic acids.. Presumably involved in the processing and regular turnover of intracellular proteins. Catalyzes the removal of unsubstituted N-terminal amino acids from various peptides. The protein is Probable cytosol aminopeptidase of Rickettsia africae (strain ESF-5).